A 137-amino-acid chain; its full sequence is Nucleoside diphosphate kinase (137 aa).

Residues K9, F57, R85, T91, R102, and N112 each contribute to the ATP site. Catalysis depends on H115, which acts as the Pros-phosphohistidine intermediate.

The protein belongs to the NDK family. As to quaternary structure, homotetramer. The cofactor is Mg(2+).

It is found in the cytoplasm. It carries out the reaction a 2'-deoxyribonucleoside 5'-diphosphate + ATP = a 2'-deoxyribonucleoside 5'-triphosphate + ADP. The enzyme catalyses a ribonucleoside 5'-diphosphate + ATP = a ribonucleoside 5'-triphosphate + ADP. Major role in the synthesis of nucleoside triphosphates other than ATP. The ATP gamma phosphate is transferred to the NDP beta phosphate via a ping-pong mechanism, using a phosphorylated active-site intermediate. The sequence is that of Nucleoside diphosphate kinase from Syntrophotalea carbinolica (strain DSM 2380 / NBRC 103641 / GraBd1) (Pelobacter carbinolicus).